The following is a 381-amino-acid chain: Putative F-box/kelch-repeat protein At1g60570 (381 aa).

The F-box domain maps to 19–65 (PTLIPSLPEELILSILARVSRLSYRSLSLVCKRFHSLLTSGEIYRFR). Kelch repeat units lie at residues 126-169 (KIYK…LIDG), 171-218 (IYVT…ERTN), 220-266 (LLVD…VIEN), and 269-314 (YDFF…DYGG).

This chain is Putative F-box/kelch-repeat protein At1g60570, found in Arabidopsis thaliana (Mouse-ear cress).